We begin with the raw amino-acid sequence, 601 residues long: Elongation factor 4 (601 aa).

The tr-type G domain occupies 7–189 (SHIRNFSIIA…SIVQLVPPPQ (183 aa)). Residues 19–24 (DHGKST) and 136–139 (NKID) contribute to the GTP site.

Belongs to the TRAFAC class translation factor GTPase superfamily. Classic translation factor GTPase family. LepA subfamily.

It is found in the cell inner membrane. The catalysed reaction is GTP + H2O = GDP + phosphate + H(+). Functionally, required for accurate and efficient protein synthesis under certain stress conditions. May act as a fidelity factor of the translation reaction, by catalyzing a one-codon backward translocation of tRNAs on improperly translocated ribosomes. Back-translocation proceeds from a post-translocation (POST) complex to a pre-translocation (PRE) complex, thus giving elongation factor G a second chance to translocate the tRNAs correctly. Binds to ribosomes in a GTP-dependent manner. This chain is Elongation factor 4, found in Trichodesmium erythraeum (strain IMS101).